The following is a 356-amino-acid chain: tRNA N6-adenosine threonylcarbamoyltransferase (356 aa).

His115 and His119 together coordinate Fe cation. Substrate-binding positions include 138–142 (LVSGG), Asp171, Gly184, and Asn283. Asp311 lines the Fe cation pocket.

Belongs to the KAE1 / TsaD family. It depends on Fe(2+) as a cofactor.

It localises to the cytoplasm. It catalyses the reaction L-threonylcarbamoyladenylate + adenosine(37) in tRNA = N(6)-L-threonylcarbamoyladenosine(37) in tRNA + AMP + H(+). Functionally, required for the formation of a threonylcarbamoyl group on adenosine at position 37 (t(6)A37) in tRNAs that read codons beginning with adenine. Is involved in the transfer of the threonylcarbamoyl moiety of threonylcarbamoyl-AMP (TC-AMP) to the N6 group of A37, together with TsaE and TsaB. TsaD likely plays a direct catalytic role in this reaction. The chain is tRNA N6-adenosine threonylcarbamoyltransferase from Prochlorococcus marinus (strain MIT 9215).